Reading from the N-terminus, the 376-residue chain is MFKESPIIRRVSRQIMVGNVPVGGDAPITVQSMTNTLTTDVAATVAQIKALEAVGADIVRVSVPTMDAAEAFREIKKQVNVPLVADIHFDYRIALKVAEYGVDCLRINPGNIGNENRIRSVVECARDNNIPIRIGVNGGSLEKDIQEKYTEPTPEALLESAMRHVDILDRLNFNEFKVSVKASDVFLAVESYKLLAKQIDNPLHLGITEAGGLRSGSVKSSVGLGLLLAQGIGDTIRISLAADPIEEIKVGFDILKSLKLRSRGINLIACPSCSRQEFDVVSTVNALEQRIEDIMTPMDVSIIGCIVNGPGEAMVSDLGLTGSSKKSGYYLDGIRQKERFDNTDLVDQLEQRIRAKARSMSERLDEKNKIDILTKD.

Positions 270, 273, 305, and 312 each coordinate [4Fe-4S] cluster.

Belongs to the IspG family. [4Fe-4S] cluster is required as a cofactor.

It catalyses the reaction (2E)-4-hydroxy-3-methylbut-2-enyl diphosphate + oxidized [flavodoxin] + H2O + 2 H(+) = 2-C-methyl-D-erythritol 2,4-cyclic diphosphate + reduced [flavodoxin]. The protein operates within isoprenoid biosynthesis; isopentenyl diphosphate biosynthesis via DXP pathway; isopentenyl diphosphate from 1-deoxy-D-xylulose 5-phosphate: step 5/6. In terms of biological role, converts 2C-methyl-D-erythritol 2,4-cyclodiphosphate (ME-2,4cPP) into 1-hydroxy-2-methyl-2-(E)-butenyl 4-diphosphate. This Colwellia psychrerythraea (strain 34H / ATCC BAA-681) (Vibrio psychroerythus) protein is 4-hydroxy-3-methylbut-2-en-1-yl diphosphate synthase (flavodoxin).